The chain runs to 387 residues: Putative glutamate--cysteine ligase 2 (387 aa).

Belongs to the glutamate--cysteine ligase type 2 family. YbdK subfamily.

It catalyses the reaction L-cysteine + L-glutamate + ATP = gamma-L-glutamyl-L-cysteine + ADP + phosphate + H(+). ATP-dependent carboxylate-amine ligase which exhibits weak glutamate--cysteine ligase activity. The chain is Putative glutamate--cysteine ligase 2 from Pseudomonas fluorescens (strain ATCC BAA-477 / NRRL B-23932 / Pf-5).